Here is a 123-residue protein sequence, read N- to C-terminus: Small ribosomal subunit protein uS13c (123 aa).

Residues 90–123 (GKRHRNNLPVRGQRTRTNARSRRGSKKTVTGKKK) are disordered. The segment covering 102 to 123 (QRTRTNARSRRGSKKTVTGKKK) has biased composition (basic residues).

This sequence belongs to the universal ribosomal protein uS13 family. In terms of assembly, part of the 30S ribosomal subunit.

It localises to the plastid. Its subcellular location is the chloroplast. In terms of biological role, located at the top of the head of the 30S subunit, it contacts several helices of the 16S rRNA. The sequence is that of Small ribosomal subunit protein uS13c from Trieres chinensis (Marine centric diatom).